Here is a 72-residue protein sequence, read N- to C-terminus: IYGGDPQELSLLIKPYARRIEISGETLFCYTPDPEQVRAQLRGHRGLRLLERPPNLEDVFLRLTGREMGKYQ.

Belongs to the ABC transporter superfamily. Lipooligosaccharide exporter (TC 3.A.1.102) family. In terms of assembly, the complex is composed of two ATP-binding proteins (NodI) and two transmembrane proteins (NodJ).

It is found in the cell inner membrane. Its function is as follows. Part of the ABC transporter complex NodIJ involved in the export of the nodulation factors (Nod factors), the bacterial signal molecules that induce symbiosis and subsequent nodulation induction. Nod factors are LCO (lipo-chitin oligosaccharide), a modified beta-1,4-linked N-acetylglucosamine oligosaccharide. This subunit is responsible for energy coupling to the transport system. This Rhizobium leguminosarum bv. trifolii protein is Nod factor export ATP-binding protein I.